The chain runs to 370 residues: Histidinol-phosphate aminotransferase 1 (370 aa).

Lys222 bears the N6-(pyridoxal phosphate)lysine mark.

This sequence belongs to the class-II pyridoxal-phosphate-dependent aminotransferase family. Histidinol-phosphate aminotransferase subfamily. In terms of assembly, homodimer. The cofactor is pyridoxal 5'-phosphate.

The catalysed reaction is L-histidinol phosphate + 2-oxoglutarate = 3-(imidazol-4-yl)-2-oxopropyl phosphate + L-glutamate. It participates in amino-acid biosynthesis; L-histidine biosynthesis; L-histidine from 5-phospho-alpha-D-ribose 1-diphosphate: step 7/9. This chain is Histidinol-phosphate aminotransferase 1, found in Bacillus cereus (strain ATCC 10987 / NRS 248).